The following is a 128-amino-acid chain: Histone H2A.2 (128 aa).

The protein belongs to the histone H2A family. The nucleosome is a histone octamer containing two molecules each of H2A, H2B, H3 and H4 assembled in one H3-H4 heterotetramer and two H2A-H2B heterodimers. The octamer wraps approximately 147 bp of DNA. In terms of tissue distribution, expressed in the generative cell within the bicellular pollen. Not detected in other reproductive or vegetative tissues.

It is found in the nucleus. It localises to the chromosome. Core component of nucleosome. Nucleosomes wrap and compact DNA into chromatin, limiting DNA accessibility to the cellular machineries which require DNA as a template. Histones thereby play a central role in transcription regulation, DNA repair, DNA replication and chromosomal stability. DNA accessibility is regulated via a complex set of post-translational modifications of histones, also called histone code, and nucleosome remodeling. May be involved in the repression of gene expression in male gametes. The protein is Histone H2A.2 (gH2A) of Lilium longiflorum (Trumpet lily).